Reading from the N-terminus, the 245-residue chain is Probable phosphatase Ent638_1550 (245 aa).

Zn(2+) contacts are provided by histidine 7, histidine 9, histidine 15, histidine 40, glutamate 73, histidine 101, histidine 131, aspartate 192, and histidine 194.

This sequence belongs to the PHP family. Homotrimer. Zn(2+) serves as cofactor.

The sequence is that of Probable phosphatase Ent638_1550 from Enterobacter sp. (strain 638).